Here is a 248-residue protein sequence, read N- to C-terminus: Phycocyanobilin:ferredoxin oxidoreductase (248 aa).

It belongs to the HY2 family.

The enzyme catalyses (2R,3Z)-phycocyanobilin + 4 oxidized [2Fe-2S]-[ferredoxin] = biliverdin IXalpha + 4 reduced [2Fe-2S]-[ferredoxin] + 4 H(+). Its function is as follows. Catalyzes the four-electron reduction of biliverdin IX-alpha (2-electron reduction at both the A and D rings); the reaction proceeds via an isolatable 2-electron intermediate, 181,182-dihydrobiliverdin. This Synechocystis sp. (strain ATCC 27184 / PCC 6803 / Kazusa) protein is Phycocyanobilin:ferredoxin oxidoreductase (pcyA).